We begin with the raw amino-acid sequence, 277 residues long: NLP effector protein Pc109095 (277 aa).

The signal sequence occupies residues 1–19 (MKFIFAFVLCLAVAQTALG). The Hepta-peptide GHRHDWE motif motif lies at 119–125 (RSRHLWA). An N-linked (GlcNAc...) asparagine glycan is attached at Asn199.

The protein belongs to the Necrosis inducing protein (NPP1) family.

The protein localises to the secreted. Its function is as follows. Secreted effector that contributes strongly to virulence during infection by P.capsici. The chain is NLP effector protein Pc109095 from Phytophthora capsici.